Reading from the N-terminus, the 406-residue chain is Probable peptidoglycan glycosyltransferase FtsW (406 aa).

9 helical membrane-spanning segments follow: residues 22-42 (LWFVMSLIAILALGIVMVASA), 56-76 (FFMGRQILYLILGVSFGFMML), 86-106 (WGILLMLLSLVLLVLVLVPGI), 116-136 (WINLIVFNLQASEVAKVCMVV), 153-173 (LIGFALPLFLTSLFLIFLLME), 186-206 (VIALLFIGGAPVYQFIAIVIM), 280-300 (IWVEEMGLLGGVVLLSLFALM), 318-338 (FAGYMCFGFAILILAQVIINV), and 352-372 (LPLISYGGSSLIITLGSLFVV). Over residues 383–397 (SKGGESEERKRKSDE) the composition is skewed to basic and acidic residues. The interval 383-406 (SKGGESEERKRKSDESIDDGEALA) is disordered.

Belongs to the SEDS family. FtsW subfamily.

It localises to the cell inner membrane. It catalyses the reaction [GlcNAc-(1-&gt;4)-Mur2Ac(oyl-L-Ala-gamma-D-Glu-L-Lys-D-Ala-D-Ala)](n)-di-trans,octa-cis-undecaprenyl diphosphate + beta-D-GlcNAc-(1-&gt;4)-Mur2Ac(oyl-L-Ala-gamma-D-Glu-L-Lys-D-Ala-D-Ala)-di-trans,octa-cis-undecaprenyl diphosphate = [GlcNAc-(1-&gt;4)-Mur2Ac(oyl-L-Ala-gamma-D-Glu-L-Lys-D-Ala-D-Ala)](n+1)-di-trans,octa-cis-undecaprenyl diphosphate + di-trans,octa-cis-undecaprenyl diphosphate + H(+). It functions in the pathway cell wall biogenesis; peptidoglycan biosynthesis. Its function is as follows. Peptidoglycan polymerase that is essential for cell division. The polypeptide is Probable peptidoglycan glycosyltransferase FtsW (Marinomonas mediterranea (strain ATCC 700492 / JCM 21426 / NBRC 103028 / MMB-1)).